The chain runs to 141 residues: Hemoglobin subunit alpha-A (141 aa).

The Globin domain occupies 1–141; it reads VLNAGDKANV…VGTVLTSKYR (141 aa). His-58 is an O2 binding site. His-87 provides a ligand contact to heme b.

This sequence belongs to the globin family. Heterotetramer of two alpha chains and two beta chains. In terms of tissue distribution, red blood cells.

Involved in oxygen transport from the lung to the various peripheral tissues. The chain is Hemoglobin subunit alpha-A (HBAA) from Chrysemys picta bellii (Western painted turtle).